A 245-amino-acid polypeptide reads, in one-letter code: Ubiquinone biosynthesis O-methyltransferase (245 aa).

S-adenosyl-L-methionine-binding residues include R49, G69, D90, and M134.

It belongs to the methyltransferase superfamily. UbiG/COQ3 family.

The catalysed reaction is a 3-demethylubiquinol + S-adenosyl-L-methionine = a ubiquinol + S-adenosyl-L-homocysteine + H(+). The enzyme catalyses a 3-(all-trans-polyprenyl)benzene-1,2-diol + S-adenosyl-L-methionine = a 2-methoxy-6-(all-trans-polyprenyl)phenol + S-adenosyl-L-homocysteine + H(+). Its pathway is cofactor biosynthesis; ubiquinone biosynthesis. In terms of biological role, O-methyltransferase that catalyzes the 2 O-methylation steps in the ubiquinone biosynthetic pathway. This Vibrio cholerae serotype O1 (strain ATCC 39541 / Classical Ogawa 395 / O395) protein is Ubiquinone biosynthesis O-methyltransferase.